Consider the following 279-residue polypeptide: uncharacterized protein (279 aa).

Residues 1-31 form the signal peptide; sequence MLVQSRTLVTAILSCSLVFGTTVNGASVAIA.

This is an uncharacterized protein from Corynebacterium glutamicum (strain ATCC 13032 / DSM 20300 / JCM 1318 / BCRC 11384 / CCUG 27702 / LMG 3730 / NBRC 12168 / NCIMB 10025 / NRRL B-2784 / 534).